The primary structure comprises 200 residues: High mobility group protein 1 homolog (200 aa).

2 DNA-binding regions (HMG box) span residues 11–81 (PRGR…QSYK) and 100–168 (PKRN…AEYK). The segment covering 64–86 (EKSMRDKVRYDREMQSYKPPKGE) has biased composition (basic and acidic residues). 2 disordered regions span residues 64–103 (EKSMRDKVRYDREMQSYKPPKGEKNKRRRRRKDPDAPKRN) and 169–200 (AKAKPMKRQVKESSSSSSSDSSSDDSSSDDSD). Residues 190-200 (SSDDSSSDDSD) are compositionally biased toward acidic residues.

This sequence belongs to the HMGB family.

Its subcellular location is the nucleus. It localises to the chromosome. In terms of biological role, binds preferentially single-stranded DNA and unwinds double-stranded DNA. The sequence is that of High mobility group protein 1 homolog (HMG1) from Strongylocentrotus purpuratus (Purple sea urchin).